The primary structure comprises 142 residues: Universal stress protein D (142 aa).

It belongs to the universal stress protein A family.

It localises to the cytoplasm. Required for resistance to DNA-damaging agents. The polypeptide is Universal stress protein D (uspD) (Escherichia coli O157:H7).